A 1223-amino-acid chain; its full sequence is ATP-dependent DNA helicase P143 (1223 aa).

The Nuclear localization signal signature appears at 692 to 701 (RKCRCVQKIK). ATP is bound at residue 919 to 926 (GVPLSGKS). A DNA-binding region (H-T-H motif) is located at residues 967–981 (TINELKKCSESFFKK).

It localises to the host nucleus. The enzyme catalyses ATP + H2O = ADP + phosphate + H(+). Essential for the initiation of viral DNA replication, it may contribute to other functions such as controlling the switch to the late phase and leading to the inhibition of host protein synthesis. Required for late and very late gene expression. The chain is ATP-dependent DNA helicase P143 (P143) from Orgyia pseudotsugata multicapsid polyhedrosis virus (OpMNPV).